We begin with the raw amino-acid sequence, 331 residues long: Beta-ketoacyl-[acyl-carrier-protein] synthase III (331 aa).

Active-site residues include Cys-113 and His-256. The ACP-binding stretch occupies residues 257-261 (QANKR). The active site involves Asn-286.

This sequence belongs to the thiolase-like superfamily. FabH family. In terms of assembly, homodimer.

The protein resides in the cytoplasm. The catalysed reaction is malonyl-[ACP] + acetyl-CoA + H(+) = 3-oxobutanoyl-[ACP] + CO2 + CoA. The protein operates within lipid metabolism; fatty acid biosynthesis. Functionally, catalyzes the condensation reaction of fatty acid synthesis by the addition to an acyl acceptor of two carbons from malonyl-ACP. Catalyzes the first condensation reaction which initiates fatty acid synthesis and may therefore play a role in governing the total rate of fatty acid production. Possesses both acetoacetyl-ACP synthase and acetyl transacylase activities. Its substrate specificity determines the biosynthesis of branched-chain and/or straight-chain of fatty acids. The sequence is that of Beta-ketoacyl-[acyl-carrier-protein] synthase III from Solibacter usitatus (strain Ellin6076).